A 436-amino-acid polypeptide reads, in one-letter code: 3-ketoacyl-CoA thiolase (436 aa).

Cys-99 serves as the catalytic Acyl-thioester intermediate. Active-site proton acceptor residues include His-392 and Cys-422.

This sequence belongs to the thiolase-like superfamily. Thiolase family. Heterotetramer of two alpha chains (FadJ) and two beta chains (FadI).

The protein localises to the cytoplasm. It catalyses the reaction an acyl-CoA + acetyl-CoA = a 3-oxoacyl-CoA + CoA. It functions in the pathway lipid metabolism; fatty acid beta-oxidation. Catalyzes the final step of fatty acid oxidation in which acetyl-CoA is released and the CoA ester of a fatty acid two carbons shorter is formed. This chain is 3-ketoacyl-CoA thiolase, found in Shewanella pealeana (strain ATCC 700345 / ANG-SQ1).